Here is a 280-residue protein sequence, read N- to C-terminus: Tryptophan 2,3-dioxygenase (280 aa).

Substrate contacts are provided by residues 47-51, Y109, and R113; that span reads FVVQH. H236 contacts heme. T250 contacts substrate.

Belongs to the tryptophan 2,3-dioxygenase family. Homotetramer. Heme is required as a cofactor.

It carries out the reaction L-tryptophan + O2 = N-formyl-L-kynurenine. It functions in the pathway amino-acid degradation; L-tryptophan degradation via kynurenine pathway; L-kynurenine from L-tryptophan: step 1/2. Heme-dependent dioxygenase that catalyzes the oxidative cleavage of the L-tryptophan (L-Trp) pyrrole ring and converts L-tryptophan to N-formyl-L-kynurenine. Catalyzes the oxidative cleavage of the indole moiety. The protein is Tryptophan 2,3-dioxygenase of Serratia proteamaculans (strain 568).